A 163-amino-acid chain; its full sequence is 3-isopropylmalate dehydratase small subunit (163 aa).

The protein belongs to the LeuD family. LeuD type 2 subfamily. In terms of assembly, heterodimer of LeuC and LeuD.

It carries out the reaction (2R,3S)-3-isopropylmalate = (2S)-2-isopropylmalate. Its pathway is amino-acid biosynthesis; L-leucine biosynthesis; L-leucine from 3-methyl-2-oxobutanoate: step 2/4. Catalyzes the isomerization between 2-isopropylmalate and 3-isopropylmalate, via the formation of 2-isopropylmaleate. The polypeptide is 3-isopropylmalate dehydratase small subunit (Thermococcus kodakarensis (strain ATCC BAA-918 / JCM 12380 / KOD1) (Pyrococcus kodakaraensis (strain KOD1))).